Here is a 90-residue protein sequence, read N- to C-terminus: Small ribosomal subunit protein uS15 (90 aa).

This sequence belongs to the universal ribosomal protein uS15 family. In terms of assembly, part of the 30S ribosomal subunit. Forms a bridge to the 50S subunit in the 70S ribosome, contacting the 23S rRNA.

One of the primary rRNA binding proteins, it binds directly to 16S rRNA where it helps nucleate assembly of the platform of the 30S subunit by binding and bridging several RNA helices of the 16S rRNA. Its function is as follows. Forms an intersubunit bridge (bridge B4) with the 23S rRNA of the 50S subunit in the ribosome. This chain is Small ribosomal subunit protein uS15, found in Campylobacter jejuni subsp. doylei (strain ATCC BAA-1458 / RM4099 / 269.97).